A 912-amino-acid chain; its full sequence is Metabotropic glutamate receptor 4 (912 aa).

The first 32 residues, 1–32 (MPGKSGLGWWWARLPLCLLLSLYGPWMPSSLG), serve as a signal peptide directing secretion. The Extracellular segment spans residues 33-586 (KPKGHPHMNS…PIIKLEWDSP (554 aa)). Cysteines 67 and 109 form a disulfide. N98 carries an N-linked (GlcNAc...) asparagine glycan. L-glutamate is bound by residues S159, 180–182 (AST), and Y230. 7 cysteine pairs are disulfide-bonded: C249/C538, C372/C388, C428/C435, C520/C539, C524/C542, C545/C557, and C560/C573. N301 carries N-linked (GlcNAc...) asparagine glycosylation. Residue D312 coordinates L-glutamate. K405 contributes to the L-glutamate binding site. N-linked (GlcNAc...) asparagine glycosylation is found at N454 and N484. An N-linked (GlcNAc...) asparagine glycan is attached at N569. The helical transmembrane segment at 587-607 (WAVLPLFLAVVGIAATLFVVI) threads the bilayer. Over 608 to 624 (TFVRYNDTPIVKASGRE) the chain is Cytoplasmic. A helical membrane pass occupies residues 625–645 (LSYVLLAGIFLCYATTFLMIA). Topologically, residues 646-653 (EPDLGTCS) are extracellular. A helical membrane pass occupies residues 654–671 (LRRIFLGLGMSISYAALL). The Cytoplasmic segment spans residues 672–699 (TKTNRIYRIFEQGKRSVSAPRFISPASQ). Residues 700-720 (LAITFSLISLQLLGICVWFVV) traverse the membrane as a helical segment. The Extracellular segment spans residues 721–751 (DPSHSVVDFQDQRTLDPRFARGVLKCDISDL). A helical membrane pass occupies residues 752–772 (SLICLLGYSMLLMVTCTVYAI). The Cytoplasmic segment spans residues 773–786 (KTRGVPETFNEAKP). Residues 787 to 807 (IGFTMYTTCIVWLAFIPIFFG) traverse the membrane as a helical segment. The Extracellular portion of the chain corresponds to 808-826 (TSQSADKLYIQTTTLTVSV). The chain crosses the membrane as a helical span at residues 827-847 (SLSASVSLGMLYMPKVYIILF). The Cytoplasmic portion of the chain corresponds to 848 to 912 (HPEQNVPKRK…TYVTYTNHAI (65 aa)).

This sequence belongs to the G-protein coupled receptor 3 family. In terms of assembly, interacts with PICK1.

Its subcellular location is the cell membrane. Functionally, G-protein coupled receptor for glutamate. Ligand binding causes a conformation change that triggers signaling via guanine nucleotide-binding proteins (G proteins) and modulates the activity of down-stream effectors. Signaling inhibits adenylate cyclase activity. In Macaca fascicularis (Crab-eating macaque), this protein is Metabotropic glutamate receptor 4 (GRM4).